Here is a 375-residue protein sequence, read N- to C-terminus: Protein HrmA (375 aa).

Functionally, unknown. May serve a regulatory function. This is Protein HrmA (hrmA) from Pseudomonas syringae pv. syringae.